Consider the following 170-residue polypeptide: uncharacterized protein (170 aa).

A coiled-coil region spans residues 15 to 81 (EAFDEKAEKE…EREKSKSAVS (67 aa)). Residues 20-77 (KAEKEKVEKEKALKEKTEKEKAEKEKAEKEKVEKEKAEKEKAAKEKAAKEKAEREKSK) are compositionally biased toward basic and acidic residues. The disordered stretch occupies residues 20–95 (KAEKEKVEKE…NQNSNKGNVE (76 aa)). Polar residues predominate over residues 78 to 92 (SAVSPATTNQNSNKG). The helical transmembrane segment at 98 to 118 (VAIGVLAGGAVTGVAVGGAYL) threads the bilayer.

Its subcellular location is the membrane. This is an uncharacterized protein from Dictyostelium discoideum (Social amoeba).